A 203-amino-acid polypeptide reads, in one-letter code: uncharacterized protein (203 aa).

This is an uncharacterized protein from Haemophilus influenzae (strain ATCC 51907 / DSM 11121 / KW20 / Rd).